We begin with the raw amino-acid sequence, 644 residues long: Protein cueball (644 aa).

The first 26 residues, 1–26, serve as a signal peptide directing secretion; that stretch reads MIRIRFGMDVLLVLLLATCLLSPTHG. Over 27-531 the chain is Extracellular; that stretch reads TPLEWDFAVT…VCLTPTVWTS (505 aa). Residues Asn-82 and Asn-108 are each glycosylated (N-linked (GlcNAc...) asparagine). LDL-receptor class B repeat units follow at residues 121–166, 167–211, and 212–257; these read TNLF…DVCR, RKLY…DQLS, and DRLF…TNDA. N-linked (GlcNAc...) asparagine glycans are attached at residues Asn-175 and Asn-190. The N-linked (GlcNAc...) asparagine glycan is linked to Asn-313. EGF-like domains follow at residues 398-430 and 433-471; these read EIRECHNYCVHGTCQMSESAYPKCYCQPGFTGE and EVSVCAGLCLNGGHCRASKEENEAPTCECPAKFGGARCE. 5 disulfides stabilise this stretch: Cys-402/Cys-411, Cys-406/Cys-421, Cys-437/Cys-447, Cys-441/Cys-459, and Cys-461/Cys-470. 2 N-linked (GlcNAc...) asparagine glycosylation sites follow: Asn-473 and Asn-508. The helical transmembrane segment at 532–552 threads the bilayer; the sequence is SVIIILVVGIVSSLLLVAVIV. At 553-644 the chain is on the cytoplasmic side; the sequence is HGIRRLYKPK…LIHNMEDDLY (92 aa).

This sequence belongs to the cueball family.

Its subcellular location is the cell membrane. Its function is as follows. Has a role in spermatogenesis and oogenesis. The sequence is that of Protein cueball from Drosophila yakuba (Fruit fly).